A 406-amino-acid chain; its full sequence is Succinylornithine transaminase (406 aa).

Residue Lys-252 is modified to N6-(pyridoxal phosphate)lysine.

It belongs to the class-III pyridoxal-phosphate-dependent aminotransferase family. AstC subfamily. Pyridoxal 5'-phosphate serves as cofactor.

It carries out the reaction N(2)-succinyl-L-ornithine + 2-oxoglutarate = N-succinyl-L-glutamate 5-semialdehyde + L-glutamate. It participates in amino-acid degradation; L-arginine degradation via AST pathway; L-glutamate and succinate from L-arginine: step 3/5. Functionally, catalyzes the transamination of N(2)-succinylornithine and alpha-ketoglutarate into N(2)-succinylglutamate semialdehyde and glutamate. Can also act as an acetylornithine aminotransferase. This is Succinylornithine transaminase from Escherichia coli (strain 55989 / EAEC).